The primary structure comprises 344 residues: Serpentine receptor class H-72 (344 aa).

7 helical membrane passes run 30 to 50 (GLAF…FFTG), 66 to 86 (LSLV…SFFI), 110 to 132 (TVVQ…TLLF), 155 to 175 (WLAG…FNLA), 221 to 241 (SIYM…LVIV), 259 to 279 (YGLI…SVLI), and 292 to 312 (LVSI…LLVH).

It belongs to the nematode receptor-like protein srh family.

Its subcellular location is the membrane. The chain is Serpentine receptor class H-72 (srh-72) from Caenorhabditis elegans.